Here is a 315-residue protein sequence, read N- to C-terminus: MTSRMPTVVPCLLGPTASGKTAAALALAARRPVEIISVDSALVYREMDIGTAKPTAEERAVAPHHLIDIVDPTDAYSAAQFRADTLRLTAEIHARGRLPLLVGGTMLYYKALTQGLNDLPAADAEVRATLDADAAREGWPALHARLAALDPVTAARLAPNDSQRIQRALEVFMLTGQTMSALLAAPVMQDDSAALWRFVPIALEPSERSVLHARIEKRFDAMLAGGFIDEVVKLRERGDLLPEMASMRCVGYRQVWEYLDGAVDYSTMRDKGVFATRQLCKRQLTWLRSMPERVVVDCCDPHATARVLEAIEALL.

14 to 21 is a binding site for ATP; it reads GPTASGKT. 16–21 serves as a coordination point for substrate; sequence TASGKT. Interaction with substrate tRNA stretches follow at residues 39–42, 163–167, and 248–253; these read DSAL, QRIQR, and RCVGYR.

Belongs to the IPP transferase family. Monomer. It depends on Mg(2+) as a cofactor.

It catalyses the reaction adenosine(37) in tRNA + dimethylallyl diphosphate = N(6)-dimethylallyladenosine(37) in tRNA + diphosphate. Catalyzes the transfer of a dimethylallyl group onto the adenine at position 37 in tRNAs that read codons beginning with uridine, leading to the formation of N6-(dimethylallyl)adenosine (i(6)A). In Paraburkholderia phytofirmans (strain DSM 17436 / LMG 22146 / PsJN) (Burkholderia phytofirmans), this protein is tRNA dimethylallyltransferase.